The primary structure comprises 277 residues: Caspase-3 (277 aa).

Position 1 is an N-acetylmethionine (methionine 1). Propeptides lie at residues 1 to 9 (MENTENSVD) and 10 to 28 (AKSF…KSMD). Position 11 is an N6-acetyllysine (lysine 11). Serine 26 bears the Phosphoserine mark. Active-site residues include histidine 121 and cysteine 163. S-nitrosocysteine; in inhibited form is present on cysteine 163.

The protein belongs to the peptidase C14A family. In terms of assembly, heterotetramer that consists of two anti-parallel arranged heterodimers, each one formed by a 17 kDa (p17) and a 12 kDa (p12) subunit. Interacts with BIRC6/bruce. Cleavage by granzyme B, caspase-6, caspase-8 and caspase-10 generates the two active subunits. Additional processing of the propeptides is likely due to the autocatalytic activity of the activated protease. Active heterodimers between the small subunit of caspase-7 protease and the large subunit of caspase-3 also occur and vice versa. Post-translationally, S-nitrosylated on its catalytic site cysteine in unstimulated cell lines and denitrosylated upon activation of the Fas apoptotic pathway, associated with an increase in intracellular caspase activity. Fas therefore activates caspase-3 not only by inducing the cleavage of the caspase zymogen to its active subunits, but also by stimulating the denitrosylation of its active site thiol. In terms of processing, ubiquitinated by BIRC6; this activity is inhibited by DIABLO/SMAC.

It is found in the cytoplasm. It catalyses the reaction Strict requirement for an Asp residue at positions P1 and P4. It has a preferred cleavage sequence of Asp-Xaa-Xaa-Asp-|- with a hydrophobic amino-acid residue at P2 and a hydrophilic amino-acid residue at P3, although Val or Ala are also accepted at this position.. Its activity is regulated as follows. Inhibited by BIRC6; following inhibition of BIRC6-caspase binding by DIABLO/SMAC, BIRC6 is subjected to caspase cleavage, leading to an increase in active caspases. Its function is as follows. Involved in the activation cascade of caspases responsible for apoptosis execution. At the onset of apoptosis, it proteolytically cleaves poly(ADP-ribose) polymerase PARP1 at a '216-Asp-|-Gly-217' bond. Cleaves and activates sterol regulatory element binding proteins (SREBPs) between the basic helix-loop-helix leucine zipper domain and the membrane attachment domain. Cleaves and activates caspase-6, -7 and -9 (CASP6, CASP7 and CASP9, respectively). Cleaves and inactivates interleukin-18 (IL18). Triggers cell adhesion in sympathetic neurons through RET cleavage. Cleaves IL-1 beta between an Asp and an Ala, releasing the mature cytokine which is involved in a variety of inflammatory processes. Cleaves and inhibits serine/threonine-protein kinase AKT1 in response to oxidative stress. Acts as an inhibitor of type I interferon production during virus-induced apoptosis by mediating cleavage of antiviral proteins CGAS, IRF3 and MAVS, thereby preventing cytokine overproduction. Also involved in pyroptosis by mediating cleavage and activation of gasdermin-E (GSDME). Cleaves XRCC4 and phospholipid scramblase proteins XKR4, XKR8 and XKR9, leading to promote phosphatidylserine exposure on apoptotic cell surface. Cleaves BIRC6 following inhibition of BIRC6-caspase binding by DIABLO/SMAC. This chain is Caspase-3 (CASP3), found in Canis lupus familiaris (Dog).